The following is a 463-amino-acid chain: SCF E3 ubiquitin ligase complex F-box protein pof2 (463 aa).

Residues 1–42 (MRVPNEVCFNILSYLEADELRCKSTVCTSWRNFIIPTLWEKV) enclose the F-box domain. LRR repeat units follow at residues 145 to 170 (CPNL…IIKR), 171 to 196 (CPYL…LSEK), 198 to 220 (DLIE…SRLV), 225 to 247 (GLKE…LNLN), 249 to 271 (ELDA…DIEL), 278 to 299 (KLNS…LSLT), 304 to 326 (SLTT…CLLK), 328 to 353 (CKNI…IAKL), 354 to 378 (PYLQ…LSGS), and 380 to 405 (SRNL…LMYN).

Part of a SCF E3 ubiquitin ligase complex. Interacts with skp1.

It is found in the mitochondrion. In terms of biological role, involved in substrate recognition in ubiquitin-dependent degradation. In Schizosaccharomyces pombe (strain 972 / ATCC 24843) (Fission yeast), this protein is SCF E3 ubiquitin ligase complex F-box protein pof2 (pof2).